The sequence spans 1889 residues: E3 ubiquitin-protein ligase UBR3 (1889 aa).

The disordered stretch occupies residues 1-27; that stretch reads MAAAAAAAAVGDPQPPQPEAPAQGLAL. Residues 118–189 form a UBR-type zinc finger; that stretch reads ALCGLVWTAN…ESGFCRRHQI (72 aa). The segment at 338 to 362 is disordered; it reads LGQIDSSDEEDQDGSQGLGKRKRVK. A phosphoserine mark is found at Ser343 and Ser344. 2 helical membrane-spanning segments follow: residues 761 to 781 and 919 to 939; these read MLEG…HLGM and LLHC…ILMD. The stretch at 1167–1199 forms a coiled coil; the sequence is KKITAAEKKTLDKEERRQKARERQQKLLAEFAS. Ser1199 is subject to Phosphoserine. An RING-type; degenerate zinc finger spans residues 1306 to 1364; it reads DSSCLLAVSIGWEGGVYVQTCGHTLHIDCHKSYMESLRNDQVLQGFSVDKGEFTCPLCR. A helical transmembrane segment spans residues 1807–1827; sequence QNCGAGTGIFLLINASVIIII.

This sequence belongs to the E3 ubiquitin-protein ligase UBR1-like family. In terms of assembly, interacts with UBE2A and UBE2B. Expressed in numerous cells of the smell, touch, vision, hearing and taste senses. Expressed in cells of the olfactory pathway, including the olfactory cell layer of the main olfactory epithelium (MOE), a mitral neuron cell layer of the olfactory bulb (OB), and a pyramidal cell layer of the piriform cortex of the olfactory cortex (OC). Expressed in the vomeronasal sensory epithelium of the vomeronasal organ (VNO) and the mitral cells of the accessory olfactory bulb. Expressed in tactile tissues, including the dorsal root ganglion, trigeminal ganglion and follicle-sinus complexes. Expressed in cells between hair follicle and sinus and also in the region of the rete ridge collar. Expressed in taste buds of the fungiform, circumvallate, and foliate papillae. Expressed in the spiral ganglion, the organ of Corti of the cochlea in the inner ear, in the sensory epithelium of macula and vestibular ganglion of the balancing system (at protein level). Expressed in the liver and skeletal muscle.

Its subcellular location is the membrane. It catalyses the reaction S-ubiquitinyl-[E2 ubiquitin-conjugating enzyme]-L-cysteine + [acceptor protein]-L-lysine = [E2 ubiquitin-conjugating enzyme]-L-cysteine + N(6)-ubiquitinyl-[acceptor protein]-L-lysine.. It functions in the pathway protein modification; protein ubiquitination. Functionally, E3 ubiquitin-protein ligase which is a component of the N-end rule pathway. Does not bind to proteins bearing specific N-terminal residues that are destabilizing according to the N-end rule, leading to their ubiquitination and subsequent degradation. May play a role in Shh signaling by mediating the ubiquitination of Kif7. May be important for MYH9 function in certain tissues, possibly by regulating the ubiquitination of MYH9 and consequently affecting its interaction with MYO7A. The chain is E3 ubiquitin-protein ligase UBR3 (Ubr3) from Mus musculus (Mouse).